Here is a 94-residue protein sequence, read N- to C-terminus: Integration host factor subunit beta (94 aa).

The protein belongs to the bacterial histone-like protein family. In terms of assembly, heterodimer of an alpha and a beta chain.

Its function is as follows. This protein is one of the two subunits of integration host factor, a specific DNA-binding protein that functions in genetic recombination as well as in transcriptional and translational control. The protein is Integration host factor subunit beta of Yersinia enterocolitica serotype O:8 / biotype 1B (strain NCTC 13174 / 8081).